The primary structure comprises 1613 residues: Vitellogenin-2 (1613 aa).

Positions 1-15 are cleaved as a signal peptide; the sequence is MRSIIIASLVALALA. In terms of domain architecture, Vitellogenin spans 24–687; that stretch reads FEPKTDYHYK…EKNSFLPKDL (664 aa). N-linked (GlcNAc...) asparagine glycosylation is present at Asn-1268. In terms of domain architecture, VWFD spans 1308 to 1477; the sequence is SVCKVQKNQI…SYLLKNEECE (170 aa). 2 disulfide bridges follow: Cys-1310–Cys-1440 and Cys-1332–Cys-1476. Positions 1491–1531 are disordered; the sequence is KYERDEEQSDEYSSEETYDYEQENTKKSQKNQRSQKKSDLV. The segment covering 1495 to 1512 has biased composition (acidic residues); sequence DEEQSDEYSSEETYDYEQ.

Expressed in the intestine of adult hermaphrodites.

It is found in the secreted. Precursor of the egg-yolk proteins that are sources of nutrients during embryonic development. Together with other vitellogenins, may play a role in modulating life-span, acting via induction of autophagy and lysosomal lipolysis. The chain is Vitellogenin-2 (vit-2) from Caenorhabditis elegans.